A 77-amino-acid chain; its full sequence is MNAKIVALLIVVGFVGMFNVATAADPLCSLEPAVGLCKASIPRFASVGGKCQEFIYGGCGGNANNFQTQAECEAKCG.

An N-terminal signal peptide occupies residues 1 to 23 (MNAKIVALLIVVGFVGMFNVATA). The BPTI/Kunitz inhibitor domain maps to 28–76 (CSLEPAVGLCKASIPRFASVGGKCQEFIYGGCGGNANNFQTQAECEAKC). Disulfide bonds link C28–C76, C37–C59, and C51–C72.

Belongs to the venom Kunitz-type family. As to expression, expressed by the venom gland.

It is found in the secreted. Its function is as follows. Serine protease inhibitor. The chain is Kunitz-type serine protease inhibitor cvp2 from Pimpla hypochondriaca (Parasitoid wasp).